Here is a 328-residue protein sequence, read N- to C-terminus: Carbonic anhydrase-related protein 11 (328 aa).

The signal sequence occupies residues 1 to 23; sequence MGAAARLSAPRALVLWAALGAAA. Positions 33 to 303 constitute an Alpha-carbonic anhydrase domain; the sequence is DWWSYKDNLQ…LAHRALRGNR (271 aa). Residues asparagine 118, asparagine 170, and asparagine 260 are each glycosylated (N-linked (GlcNAc...) asparagine). The disordered stretch occupies residues 299 to 328; sequence LRGNRDPRHPERRCRGPNYRLHVDGAPHGR. Positions 319–328 are enriched in basic and acidic residues; that stretch reads LHVDGAPHGR.

This sequence belongs to the alpha-carbonic anhydrase family.

The protein resides in the secreted. Its function is as follows. Does not have a catalytic activity. The protein is Carbonic anhydrase-related protein 11 (CA11) of Pongo abelii (Sumatran orangutan).